The following is a 430-amino-acid chain: Enolase (430 aa).

Gln165 is a (2R)-2-phosphoglycerate binding site. Glu207 (proton donor) is an active-site residue. Mg(2+)-binding residues include Asp244, Glu287, and Asp314. The (2R)-2-phosphoglycerate site is built by Lys339, Arg368, Ser369, and Lys390. Lys339 (proton acceptor) is an active-site residue.

It belongs to the enolase family. In terms of assembly, component of the RNA degradosome, a multiprotein complex involved in RNA processing and mRNA degradation. Mg(2+) is required as a cofactor.

The protein localises to the cytoplasm. It localises to the secreted. It is found in the cell surface. The enzyme catalyses (2R)-2-phosphoglycerate = phosphoenolpyruvate + H2O. The protein operates within carbohydrate degradation; glycolysis; pyruvate from D-glyceraldehyde 3-phosphate: step 4/5. Its function is as follows. Catalyzes the reversible conversion of 2-phosphoglycerate (2-PG) into phosphoenolpyruvate (PEP). It is essential for the degradation of carbohydrates via glycolysis. This chain is Enolase, found in Xanthomonas euvesicatoria pv. vesicatoria (strain 85-10) (Xanthomonas campestris pv. vesicatoria).